The sequence spans 478 residues: Putative response regulator NtrX-like (478 aa).

The 117-residue stretch at 5–121 folds into the Response regulatory domain; sequence DVLIVDDEED…KLVILLKRAC (117 aa). Asp54 is modified (4-aspartylphosphate). A Sigma-54 factor interaction domain is found at 143-372; the sequence is LVGNSTITLK…LRNVVEWTLI (230 aa). ATP is bound by residues 171-178 and 235-244; these read GKVGSGKE and ANNGTLYIDE.

Member of the two-component regulatory system RBE_0312/RBE_0470. The sequence is that of Putative response regulator NtrX-like from Rickettsia bellii (strain RML369-C).